A 194-amino-acid polypeptide reads, in one-letter code: Peptidyl-tRNA hydrolase (194 aa).

H22 (proton acceptor) is an active-site residue. Y67, N69, and N115 together coordinate tRNA.

The protein belongs to the PTH family. Monomer.

It localises to the cytoplasm. The catalysed reaction is an N-acyl-L-alpha-aminoacyl-tRNA + H2O = an N-acyl-L-amino acid + a tRNA + H(+). In terms of biological role, hydrolyzes ribosome-free peptidyl-tRNAs (with 1 or more amino acids incorporated), which drop off the ribosome during protein synthesis, or as a result of ribosome stalling. Catalyzes the release of premature peptidyl moieties from peptidyl-tRNA molecules trapped in stalled 50S ribosomal subunits, and thus maintains levels of free tRNAs and 50S ribosomes. The sequence is that of Peptidyl-tRNA hydrolase from Granulibacter bethesdensis (strain ATCC BAA-1260 / CGDNIH1).